Reading from the N-terminus, the 346-residue chain is Haptoglobin (346 aa).

Positions methionine 1–alanine 18 are cleaved as a signal peptide. The Sushi domain maps to aspartate 31–alanine 87. Cystine bridges form between cysteine 52–cysteine 85, cysteine 89–cysteine 206, cysteine 249–cysteine 280, and cysteine 291–cysteine 321. Residues isoleucine 102–alanine 344 form the Peptidase S1 domain. Residues asparagine 147 and asparagine 181 are each glycosylated (N-linked (GlcNAc...) asparagine). The interaction with CD163 stretch occupies residues valine 258 to glycine 263.

Belongs to the peptidase S1 family. As to quaternary structure, tetramer of two alpha and two beta chains; disulfide-linked. The hemoglobin/haptoglobin complex is composed of a haptoglobin dimer bound to two hemoglobin alpha-beta dimers. Interacts with CD163. Interacts with ERGIC3. As to expression, expressed by the liver and secreted in plasma.

Its subcellular location is the secreted. Functionally, as a result of hemolysis, hemoglobin is found to accumulate in the kidney and is secreted in the urine. Haptoglobin captures, and combines with free plasma hemoglobin to allow hepatic recycling of heme iron and to prevent kidney damage. Haptoglobin also acts as an antioxidant, has antibacterial activity and plays a role in modulating many aspects of the acute phase response. Hemoglobin/haptoglobin complexes are rapidly cleared by the macrophage CD163 scavenger receptor expressed on the surface of liver Kupfer cells through an endocytic lysosomal degradation pathway. In Mesocricetus auratus (Golden hamster), this protein is Haptoglobin (HP).